The chain runs to 40 residues: Photosystem II reaction center protein J (40 aa).

A helical membrane pass occupies residues 8-28 (IPLWVIGTVAGILVIGLIGIF).

Belongs to the PsbJ family. PSII is composed of 1 copy each of membrane proteins PsbA, PsbB, PsbC, PsbD, PsbE, PsbF, PsbH, PsbI, PsbJ, PsbK, PsbL, PsbM, PsbT, PsbX, PsbY, PsbZ, Psb30/Ycf12, at least 3 peripheral proteins of the oxygen-evolving complex and a large number of cofactors. It forms dimeric complexes.

It localises to the plastid. Its subcellular location is the chloroplast thylakoid membrane. In terms of biological role, one of the components of the core complex of photosystem II (PSII). PSII is a light-driven water:plastoquinone oxidoreductase that uses light energy to abstract electrons from H(2)O, generating O(2) and a proton gradient subsequently used for ATP formation. It consists of a core antenna complex that captures photons, and an electron transfer chain that converts photonic excitation into a charge separation. The protein is Photosystem II reaction center protein J of Lepidium virginicum (Virginia pepperweed).